Reading from the N-terminus, the 311-residue chain is tRNA dimethylallyltransferase (311 aa).

Residue Gly10–Thr17 coordinates ATP. Thr12–Thr17 contacts substrate. Interaction with substrate tRNA stretches follow at residues Asp35–Leu38, Gln159–Arg163, and Arg240–Arg245.

It belongs to the IPP transferase family. As to quaternary structure, monomer. It depends on Mg(2+) as a cofactor.

It catalyses the reaction adenosine(37) in tRNA + dimethylallyl diphosphate = N(6)-dimethylallyladenosine(37) in tRNA + diphosphate. Functionally, catalyzes the transfer of a dimethylallyl group onto the adenine at position 37 in tRNAs that read codons beginning with uridine, leading to the formation of N6-(dimethylallyl)adenosine (i(6)A). The polypeptide is tRNA dimethylallyltransferase (Haemophilus influenzae (strain PittEE)).